The following is a 240-amino-acid chain: Probable septum site-determining protein MinC (240 aa).

It belongs to the MinC family. As to quaternary structure, interacts with MinD and FtsZ.

Cell division inhibitor that blocks the formation of polar Z ring septums. Rapidly oscillates between the poles of the cell to destabilize FtsZ filaments that have formed before they mature into polar Z rings. Prevents FtsZ polymerization. The chain is Probable septum site-determining protein MinC from Acinetobacter baumannii (strain AYE).